A 202-amino-acid polypeptide reads, in one-letter code: NADH-quinone oxidoreductase subunit C (202 aa).

This sequence belongs to the complex I 30 kDa subunit family. As to quaternary structure, NDH-1 is composed of 14 different subunits. Subunits NuoB, C, D, E, F, and G constitute the peripheral sector of the complex.

Its subcellular location is the cell inner membrane. The catalysed reaction is a quinone + NADH + 5 H(+)(in) = a quinol + NAD(+) + 4 H(+)(out). NDH-1 shuttles electrons from NADH, via FMN and iron-sulfur (Fe-S) centers, to quinones in the respiratory chain. The immediate electron acceptor for the enzyme in this species is believed to be ubiquinone. Couples the redox reaction to proton translocation (for every two electrons transferred, four hydrogen ions are translocated across the cytoplasmic membrane), and thus conserves the redox energy in a proton gradient. The sequence is that of NADH-quinone oxidoreductase subunit C from Bartonella henselae (strain ATCC 49882 / DSM 28221 / CCUG 30454 / Houston 1) (Rochalimaea henselae).